A 238-amino-acid chain; its full sequence is Cysteine-rich venom protein 1 (238 aa).

The signal sequence occupies residues 1-19 (MIAFIVLLSLAAVLQQSSG). Residues 38-164 (VDKHNALRRS…STKYLYVCQY (127 aa)) enclose the SCP domain. Disulfide bonds link Cys-75–Cys-153, Cys-92–Cys-165, Cys-148–Cys-162, Cys-184–Cys-191, Cys-187–Cys-196, Cys-200–Cys-233, Cys-209–Cys-227, and Cys-218–Cys-231. Residues 200–233 (CEYEDTFSNCKALAKKTKCKTEWIKSKCPATCFC) form the ShKT domain.

This sequence belongs to the CRISP family. Expressed by the venom gland.

The protein localises to the secreted. In terms of biological role, blocks contraction of smooth muscle elicited by high potassium-induced depolarization, but does not block caffeine-stimulated contraction. May target voltage-gated calcium channels on smooth muscle. The sequence is that of Cysteine-rich venom protein 1 from Hydrophis hardwickii (Hardwick's spine-bellied seasnake).